The sequence spans 56 residues: Large ribosomal subunit protein bL32 (56 aa).

The tract at residues 1–29 (MAVQQNKPSRSKRGMRRSHDALTTSSVSV) is disordered.

This sequence belongs to the bacterial ribosomal protein bL32 family.

This is Large ribosomal subunit protein bL32 from Pectobacterium atrosepticum (strain SCRI 1043 / ATCC BAA-672) (Erwinia carotovora subsp. atroseptica).